Here is a 62-residue protein sequence, read N- to C-terminus: Large ribosomal subunit protein bL32 (62 aa).

The segment covering 1-16 (MAVQKNRKTRSKRGMR) has biased composition (basic residues). The segment at 1 to 62 (MAVQKNRKTR…VISQGDSDDE (62 aa)) is disordered. Polar residues predominate over residues 53–62 (VISQGDSDDE).

It belongs to the bacterial ribosomal protein bL32 family.

The protein is Large ribosomal subunit protein bL32 of Alcanivorax borkumensis (strain ATCC 700651 / DSM 11573 / NCIMB 13689 / SK2).